The chain runs to 1233 residues: ATP-dependent helicase/nuclease subunit A (1233 aa).

One can recognise a UvrD-like helicase ATP-binding domain in the interval 3 to 474 (TKWTEEQKQA…ILLYKNFRSR (472 aa)). 24–31 (AAAGSGKT) is a binding site for ATP. The UvrD-like helicase C-terminal domain maps to 518-809 (VTGGAVELHL…RIMSIHKSKG (292 aa)). Residues 533-555 (VEEEVEEKEEEKNEEKDFEEEEE) are disordered.

Belongs to the helicase family. AddA subfamily. As to quaternary structure, heterodimer of AddA and AddB/RexB. The cofactor is Mg(2+).

The enzyme catalyses Couples ATP hydrolysis with the unwinding of duplex DNA by translocating in the 3'-5' direction.. The catalysed reaction is ATP + H2O = ADP + phosphate + H(+). In terms of biological role, the heterodimer acts as both an ATP-dependent DNA helicase and an ATP-dependent, dual-direction single-stranded exonuclease. Recognizes the chi site generating a DNA molecule suitable for the initiation of homologous recombination. The AddA nuclease domain is required for chi fragment generation; this subunit has the helicase and 3' -&gt; 5' nuclease activities. This is ATP-dependent helicase/nuclease subunit A from Thermoanaerobacter pseudethanolicus (strain ATCC 33223 / 39E) (Clostridium thermohydrosulfuricum).